The chain runs to 353 residues: MITVKPGCVTFQNVRKSFGAFTAIPDLSLSIEPGTLVTLLGPSGCGKTTTLRMLAGLEHPTSGRILIGGADVTMLPANERDVSMVFQSYALFPHMTSLDNVAYGLQSSGLGKKEAREKAEEGLKLVGLAGMGHRLPAELSGGQQQRVAVARALVLEPQVLLLDEPLSNLDARLRRRVRTEIRELQQRLGFTAVYVTHDQDEALAVSDRIIVMKDGEIAQSGTPRELYEAPASSFIADFMGEANVIPCEVIGVEGTEALIRVAGVDHRLPGRNAKAGMAKLAVRPGSITIAAAGQQGLAGRVLHSAYLGGHVEYEVETDVGTLFIIDHAVERNLPPSSDVTLGFENRGIALINA.

Residues 9–239 (VTFQNVRKSF…PASSFIADFM (231 aa)) enclose the ABC transporter domain. 41-48 (GPSGCGKT) contacts ATP.

The protein belongs to the ABC transporter superfamily. Fe(3+) ion importer (TC 3.A.1.10) family. As to quaternary structure, the complex is composed of two ATP-binding proteins (FbpC), two transmembrane proteins (FbpB) and a solute-binding protein (FbpA).

It localises to the cell inner membrane. The catalysed reaction is Fe(3+)(out) + ATP + H2O = Fe(3+)(in) + ADP + phosphate + H(+). Part of the ABC transporter complex FbpABC involved in Fe(3+) ions import. Responsible for energy coupling to the transport system. The protein is Fe(3+) ions import ATP-binding protein FbpC of Rhizobium etli (strain ATCC 51251 / DSM 11541 / JCM 21823 / NBRC 15573 / CFN 42).